Reading from the N-terminus, the 119-residue chain is Fluoride-specific ion channel FluC (119 aa).

4 consecutive transmembrane segments (helical) span residues 5–25 (ILPL…LNLA), 30–50 (LSPA…IGIF), 59–79 (WKLL…GFSL), and 92–112 (SALA…WLGL). Positions 69 and 72 each coordinate Na(+).

Belongs to the fluoride channel Fluc/FEX (TC 1.A.43) family.

It localises to the cell inner membrane. It catalyses the reaction fluoride(in) = fluoride(out). Its activity is regulated as follows. Na(+) is not transported, but it plays an essential structural role and its presence is essential for fluoride channel function. In terms of biological role, fluoride-specific ion channel. Important for reducing fluoride concentration in the cell, thus reducing its toxicity. This is Fluoride-specific ion channel FluC from Neisseria gonorrhoeae (strain NCCP11945).